The primary structure comprises 149 residues: Large ribosomal subunit protein uL15 (149 aa).

A compositionally biased stretch (basic and acidic residues) spans 1–28 (MVIKIHDLRPAPGSKRDKIRVGRGEGSK). Residues 1 to 54 (MVIKIHDLRPAPGSKRDKIRVGRGEGSKGKTAGRGTKGTKARKNVSPRFEGGQM) form a disordered region.

It belongs to the universal ribosomal protein uL15 family. Part of the 50S ribosomal subunit.

In terms of biological role, binds to the 23S rRNA. In Saccharopolyspora erythraea (strain ATCC 11635 / DSM 40517 / JCM 4748 / NBRC 13426 / NCIMB 8594 / NRRL 2338), this protein is Large ribosomal subunit protein uL15.